Reading from the N-terminus, the 166-residue chain is Large ribosomal subunit protein uL10 (166 aa).

The protein belongs to the universal ribosomal protein uL10 family. In terms of assembly, part of the ribosomal stalk of the 50S ribosomal subunit. The N-terminus interacts with L11 and the large rRNA to form the base of the stalk. The C-terminus forms an elongated spine to which L12 dimers bind in a sequential fashion forming a multimeric L10(L12)X complex.

Forms part of the ribosomal stalk, playing a central role in the interaction of the ribosome with GTP-bound translation factors. This Bacillus velezensis (strain DSM 23117 / BGSC 10A6 / LMG 26770 / FZB42) (Bacillus amyloliquefaciens subsp. plantarum) protein is Large ribosomal subunit protein uL10.